The following is a 213-amino-acid chain: GrpE protein homolog, mitochondrial (213 aa).

The disordered stretch occupies residues 35 to 55; that stretch reads STEKQPEEATEQKATESSPEV. Residues 38–55 are compositionally biased toward basic and acidic residues; sequence KQPEEATEQKATESSPEV.

Belongs to the GrpE family. Probable component of the PAM complex at least composed of a mitochondrial HSP70 protein, Roe1, TIM44, blp/TIM16 and TIM14.

It localises to the mitochondrion matrix. In terms of biological role, essential component of the PAM complex, a complex required for the translocation of transit peptide-containing proteins from the inner membrane into the mitochondrial matrix in an ATP-dependent manner. Seems to control the nucleotide-dependent binding of mitochondrial HSP70 to substrate proteins. In Drosophila melanogaster (Fruit fly), this protein is GrpE protein homolog, mitochondrial (Roe1).